The chain runs to 444 residues: CBL-interacting serine/threonine-protein kinase 1 (444 aa).

The Protein kinase domain occupies 20–275; sequence YELGRTLGEG…VVGIKASEWF (256 aa). ATP contacts are provided by residues 26–34 and Lys49; that span reads LGEGNFGKV. The active-site Proton acceptor is Asp143. An activation loop region spans residues 161–190; sequence DFGLSALPQHFRDDGLLHTTCGSPNYVAPE. Residue Ser165 is modified to Phosphoserine. Thr179 carries the post-translational modification Phosphothreonine. An NAF domain is found at 313 to 337; that stretch reads DSPTIINAFQLIGMSSFLDLSGFFE. The segment at 343–372 is PPI; it reads ERRIRFTSNSSAKDLLEKIETAVTEMGFSV.

Belongs to the protein kinase superfamily. CAMK Ser/Thr protein kinase family. SNF1 subfamily. In terms of assembly, interacts with CBL1. Interacts with CBL2. Interacts with CBL3. Interacts with CBL9. Interacts with ECT1 and ECT2. Requires Mn(2+) as cofactor. Post-translationally, autophosphorylated. As to expression, ubiquitous.

The catalysed reaction is L-seryl-[protein] + ATP = O-phospho-L-seryl-[protein] + ADP + H(+). It catalyses the reaction L-threonyl-[protein] + ATP = O-phospho-L-threonyl-[protein] + ADP + H(+). In terms of biological role, CIPK serine-threonine protein kinases interact with CBL proteins. Binding of a CBL protein to the regulatory NAF domain of CIPK protein lead to the activation of the kinase in a calcium-dependent manner. The polypeptide is CBL-interacting serine/threonine-protein kinase 1 (CIPK1) (Arabidopsis thaliana (Mouse-ear cress)).